The chain runs to 168 residues: Phosphopantetheine adenylyltransferase (168 aa).

T14 contacts substrate. Residues 14 to 15 (TF) and H22 each bind ATP. The substrate site is built by K46, L78, and R92. Residues 93 to 95 (GLR), E103, and 128 to 134 (YSFISSS) each bind ATP.

It belongs to the bacterial CoaD family. Homohexamer. Mg(2+) is required as a cofactor.

It is found in the cytoplasm. It carries out the reaction (R)-4'-phosphopantetheine + ATP + H(+) = 3'-dephospho-CoA + diphosphate. Its pathway is cofactor biosynthesis; coenzyme A biosynthesis; CoA from (R)-pantothenate: step 4/5. Its function is as follows. Reversibly transfers an adenylyl group from ATP to 4'-phosphopantetheine, yielding dephospho-CoA (dPCoA) and pyrophosphate. The chain is Phosphopantetheine adenylyltransferase from Xanthomonas campestris pv. campestris (strain B100).